The sequence spans 390 residues: Phosphopentomutase (390 aa).

The Mn(2+) site is built by D12, D285, H290, D326, H327, and H338.

The protein belongs to the phosphopentomutase family. The cofactor is Mn(2+).

The protein localises to the cytoplasm. The enzyme catalyses 2-deoxy-alpha-D-ribose 1-phosphate = 2-deoxy-D-ribose 5-phosphate. It catalyses the reaction alpha-D-ribose 1-phosphate = D-ribose 5-phosphate. It functions in the pathway carbohydrate degradation; 2-deoxy-D-ribose 1-phosphate degradation; D-glyceraldehyde 3-phosphate and acetaldehyde from 2-deoxy-alpha-D-ribose 1-phosphate: step 1/2. Its function is as follows. Isomerase that catalyzes the conversion of deoxy-ribose 1-phosphate (dRib-1-P) and ribose 1-phosphate (Rib-1-P) to deoxy-ribose 5-phosphate (dRib-5-P) and ribose 5-phosphate (Rib-5-P), respectively. The chain is Phosphopentomutase from Brevibacillus brevis (strain 47 / JCM 6285 / NBRC 100599).